A 1064-amino-acid chain; its full sequence is Carbamoyl phosphate synthase large chain (1064 aa).

The carboxyphosphate synthetic domain stretch occupies residues 1-401; sequence MPKRNDIKKI…SLLKAVRSLE (401 aa). 12 residues coordinate ATP: Arg129, Arg169, Gly175, Gly176, Glu208, Ile210, Glu215, Gly241, Val242, His243, Gln284, and Glu298. Positions 133–327 constitute an ATP-grasp 1 domain; it reads KELCESINEP…IAKMSAKIAI (195 aa). Residues Gln284, Glu298, and Asn300 each contribute to the Mg(2+) site. The Mn(2+) site is built by Gln284, Glu298, and Asn300. Residues 402-546 are oligomerization domain; sequence IGVFHNEMTE…YSTYEWENES (145 aa). The carbamoyl phosphate synthetic domain stretch occupies residues 547–929; sequence KRSDKEKIIV…ALYKSFEAAK (383 aa). One can recognise an ATP-grasp 2 domain in the interval 671-861; sequence EKALQDLDIP…MAQLATQMIL (191 aa). Positions 707, 746, 748, 752, 777, 778, 779, 780, 820, and 832 each coordinate ATP. 3 residues coordinate Mg(2+): Gln820, Glu832, and Asn834. Mn(2+) contacts are provided by Gln820, Glu832, and Asn834. The region spanning 930–1064 is the MGS-like domain; that stretch reads LHMADYGSVL…QSRSFTTKNI (135 aa). The allosteric domain stretch occupies residues 930-1064; it reads LHMADYGSVL…QSRSFTTKNI (135 aa).

Belongs to the CarB family. As to quaternary structure, composed of two chains; the small (or glutamine) chain promotes the hydrolysis of glutamine to ammonia, which is used by the large (or ammonia) chain to synthesize carbamoyl phosphate. Tetramer of heterodimers (alpha,beta)4. Mg(2+) is required as a cofactor. Requires Mn(2+) as cofactor.

It catalyses the reaction hydrogencarbonate + L-glutamine + 2 ATP + H2O = carbamoyl phosphate + L-glutamate + 2 ADP + phosphate + 2 H(+). The catalysed reaction is hydrogencarbonate + NH4(+) + 2 ATP = carbamoyl phosphate + 2 ADP + phosphate + 2 H(+). It functions in the pathway amino-acid biosynthesis; L-arginine biosynthesis; carbamoyl phosphate from bicarbonate: step 1/1. Its pathway is pyrimidine metabolism; UMP biosynthesis via de novo pathway; (S)-dihydroorotate from bicarbonate: step 1/3. Its function is as follows. Large subunit of the glutamine-dependent carbamoyl phosphate synthetase (CPSase). CPSase catalyzes the formation of carbamoyl phosphate from the ammonia moiety of glutamine, carbonate, and phosphate donated by ATP, constituting the first step of 2 biosynthetic pathways, one leading to arginine and/or urea and the other to pyrimidine nucleotides. The large subunit (synthetase) binds the substrates ammonia (free or transferred from glutamine from the small subunit), hydrogencarbonate and ATP and carries out an ATP-coupled ligase reaction, activating hydrogencarbonate by forming carboxy phosphate which reacts with ammonia to form carbamoyl phosphate. In Lactococcus lactis subsp. cremoris (strain MG1363), this protein is Carbamoyl phosphate synthase large chain.